Here is a 430-residue protein sequence, read N- to C-terminus: MLDLKQIRENPTAIQNRLNQRGGGASYDLEPILAIAAEQKAKESERTVLQSRSNEIGKLIGQKIGQGADPKGEEIQTLREEGNSLKIQLADLEPQEKDLKEQLQKLLLELPNLPCETTPIGASEADNIEVKRWGDQYLKAETVGILPHWEIGEKLGIIDSERGVKVAQSRFISLMKAGAALERALINFMLERHIGVGYQEIMPPILVNSDSLLGTGQLPKFAEESFQCRGDDLWLIPTAEVPVTNLYRDEVLDLEQLPIKHCAYTPCFRREAGSYGRDTKGLIRLHQFNKVELVKLVKPEESAAEHQALVADAEAILQALELPYRVVELCTGDLGFGAAKCYDLEVWLPSANTYREISSCSNFHDFQARRANIRYKEKGKKGTQFVHTLNGSGLAIGRTMAAILENYYEPSSGQVKVPVVLQDFLKRDYL.

238 to 240 (TAE) contributes to the L-serine binding site. 269–271 (RRE) contacts ATP. Glutamate 292 contributes to the L-serine binding site. ATP is bound at residue 356 to 359 (EISS). Residue serine 392 participates in L-serine binding.

The protein belongs to the class-II aminoacyl-tRNA synthetase family. Type-1 seryl-tRNA synthetase subfamily. In terms of assembly, homodimer. The tRNA molecule binds across the dimer.

Its subcellular location is the cytoplasm. The catalysed reaction is tRNA(Ser) + L-serine + ATP = L-seryl-tRNA(Ser) + AMP + diphosphate + H(+). The enzyme catalyses tRNA(Sec) + L-serine + ATP = L-seryl-tRNA(Sec) + AMP + diphosphate + H(+). It functions in the pathway aminoacyl-tRNA biosynthesis; selenocysteinyl-tRNA(Sec) biosynthesis; L-seryl-tRNA(Sec) from L-serine and tRNA(Sec): step 1/1. Its function is as follows. Catalyzes the attachment of serine to tRNA(Ser). Is also able to aminoacylate tRNA(Sec) with serine, to form the misacylated tRNA L-seryl-tRNA(Sec), which will be further converted into selenocysteinyl-tRNA(Sec). The protein is Serine--tRNA ligase of Synechocystis sp. (strain ATCC 27184 / PCC 6803 / Kazusa).